Consider the following 120-residue polypeptide: NAD(P)H-quinone oxidoreductase subunit 3, chloroplastic (120 aa).

The next 3 helical transmembrane spans lie at 9–29 (IFWA…TISG), 64–84 (MFAL…PWAM), and 88–108 (VLGI…IVGS).

Belongs to the complex I subunit 3 family. In terms of assembly, NDH is composed of at least 16 different subunits, 5 of which are encoded in the nucleus.

Its subcellular location is the plastid. The protein localises to the chloroplast thylakoid membrane. The catalysed reaction is a plastoquinone + NADH + (n+1) H(+)(in) = a plastoquinol + NAD(+) + n H(+)(out). It carries out the reaction a plastoquinone + NADPH + (n+1) H(+)(in) = a plastoquinol + NADP(+) + n H(+)(out). Functionally, NDH shuttles electrons from NAD(P)H:plastoquinone, via FMN and iron-sulfur (Fe-S) centers, to quinones in the photosynthetic chain and possibly in a chloroplast respiratory chain. The immediate electron acceptor for the enzyme in this species is believed to be plastoquinone. Couples the redox reaction to proton translocation, and thus conserves the redox energy in a proton gradient. This is NAD(P)H-quinone oxidoreductase subunit 3, chloroplastic from Lotus japonicus (Lotus corniculatus var. japonicus).